A 330-amino-acid chain; its full sequence is Ribosomal RNA large subunit methyltransferase F (330 aa).

It belongs to the methyltransferase superfamily. METTL16/RlmF family.

The protein localises to the cytoplasm. The catalysed reaction is adenosine(1618) in 23S rRNA + S-adenosyl-L-methionine = N(6)-methyladenosine(1618) in 23S rRNA + S-adenosyl-L-homocysteine + H(+). In terms of biological role, specifically methylates the adenine in position 1618 of 23S rRNA. This is Ribosomal RNA large subunit methyltransferase F from Pseudoalteromonas atlantica (strain T6c / ATCC BAA-1087).